The primary structure comprises 299 residues: Pyridoxal 5'-phosphate synthase subunit PdxS (299 aa).

Position 29 (Asp29) interacts with D-ribose 5-phosphate. Lys86 acts as the Schiff-base intermediate with D-ribose 5-phosphate in catalysis. Gly158 contacts D-ribose 5-phosphate. Arg170 provides a ligand contact to D-glyceraldehyde 3-phosphate. D-ribose 5-phosphate is bound by residues Gly219 and 240-241 (GS).

Belongs to the PdxS/SNZ family. In the presence of PdxT, forms a dodecamer of heterodimers.

It catalyses the reaction aldehydo-D-ribose 5-phosphate + D-glyceraldehyde 3-phosphate + L-glutamine = pyridoxal 5'-phosphate + L-glutamate + phosphate + 3 H2O + H(+). It participates in cofactor biosynthesis; pyridoxal 5'-phosphate biosynthesis. In terms of biological role, catalyzes the formation of pyridoxal 5'-phosphate from ribose 5-phosphate (RBP), glyceraldehyde 3-phosphate (G3P) and ammonia. The ammonia is provided by the PdxT subunit. Can also use ribulose 5-phosphate and dihydroxyacetone phosphate as substrates, resulting from enzyme-catalyzed isomerization of RBP and G3P, respectively. This chain is Pyridoxal 5'-phosphate synthase subunit PdxS, found in Protochlamydia amoebophila (strain UWE25).